Reading from the N-terminus, the 135-residue chain is Large ribosomal subunit protein uL16 (135 aa).

It belongs to the universal ribosomal protein uL16 family. Part of the 50S ribosomal subunit.

In terms of biological role, binds 23S rRNA and is also seen to make contacts with the A and possibly P site tRNAs. The polypeptide is Large ribosomal subunit protein uL16 (Coprothermobacter proteolyticus (strain ATCC 35245 / DSM 5265 / OCM 4 / BT)).